We begin with the raw amino-acid sequence, 413 residues long: Short-chain specific acyl-CoA dehydrogenase, mitochondrial (413 aa).

Residues 1 to 24 constitute a mitochondrion transit peptide; it reads MAAALLARACGPVRGALWPRDCRR. Threonine 27 carries the phosphothreonine modification. Position 51 is an N6-acetyllysine; alternate (lysine 51). Lysine 51 is modified (N6-succinyllysine; alternate). An N6-acetyllysine modification is found at lysine 72. Lysine 129 is subject to N6-acetyllysine; alternate. Lysine 129 carries the post-translational modification N6-succinyllysine; alternate. FAD-binding positions include 152-161 and 185-187; these read FALSEPGNGS and WIT. Serine 161 is a binding site for substrate. Lysine 208 is modified (N6-acetyllysine). Residue lysine 262 is modified to N6-acetyllysine; alternate. The residue at position 262 (lysine 262) is an N6-succinyllysine; alternate. 269 to 272 provides a ligand contact to substrate; it reads DMGR. Arginine 297 contacts FAD. Lysine 306 carries the N6-acetyllysine; alternate modification. Lysine 306 bears the N6-succinyllysine; alternate mark. Residues glutamine 308 and 366-370 each bind FAD; that span reads QILGG. Glutamate 393 (proton acceptor) is an active-site residue. Glycine 394 lines the substrate pocket. 395 to 397 contacts FAD; sequence TSE.

This sequence belongs to the acyl-CoA dehydrogenase family. As to quaternary structure, homotetramer. FAD is required as a cofactor.

The protein localises to the mitochondrion matrix. The catalysed reaction is a short-chain 2,3-saturated fatty acyl-CoA + oxidized [electron-transfer flavoprotein] + H(+) = a short-chain (2E)-enoyl-CoA + reduced [electron-transfer flavoprotein]. The enzyme catalyses butanoyl-CoA + oxidized [electron-transfer flavoprotein] + H(+) = (2E)-butenoyl-CoA + reduced [electron-transfer flavoprotein]. It carries out the reaction pentanoyl-CoA + oxidized [electron-transfer flavoprotein] + H(+) = (2E)-pentenoyl-CoA + reduced [electron-transfer flavoprotein]. It catalyses the reaction hexanoyl-CoA + oxidized [electron-transfer flavoprotein] + H(+) = (2E)-hexenoyl-CoA + reduced [electron-transfer flavoprotein]. It participates in lipid metabolism; mitochondrial fatty acid beta-oxidation. Functionally, short-chain specific acyl-CoA dehydrogenase is one of the acyl-CoA dehydrogenases that catalyze the first step of mitochondrial fatty acid beta-oxidation, an aerobic process breaking down fatty acids into acetyl-CoA and allowing the production of energy from fats. The first step of fatty acid beta-oxidation consists in the removal of one hydrogen from C-2 and C-3 of the straight-chain fatty acyl-CoA thioester, resulting in the formation of trans-2-enoyl-CoA. Among the different mitochondrial acyl-CoA dehydrogenases, short-chain specific acyl-CoA dehydrogenase acts specifically on acyl-CoAs with saturated 4 to 6 carbons long primary chains. This Sus scrofa (Pig) protein is Short-chain specific acyl-CoA dehydrogenase, mitochondrial (ACADS).